We begin with the raw amino-acid sequence, 346 residues long: Uroporphyrinogen decarboxylase (346 aa).

Residues 26 to 30, aspartate 76, tyrosine 153, serine 208, and histidine 323 each bind substrate; that span reads RQAGR.

The protein belongs to the uroporphyrinogen decarboxylase family. Homodimer.

It is found in the cytoplasm. The catalysed reaction is uroporphyrinogen III + 4 H(+) = coproporphyrinogen III + 4 CO2. The protein operates within porphyrin-containing compound metabolism; protoporphyrin-IX biosynthesis; coproporphyrinogen-III from 5-aminolevulinate: step 4/4. Catalyzes the decarboxylation of four acetate groups of uroporphyrinogen-III to yield coproporphyrinogen-III. This is Uroporphyrinogen decarboxylase from Prochlorococcus marinus (strain MIT 9301).